The following is a 334-amino-acid chain: GTPase Obg (334 aa).

Residues 1 to 159 (MKFVDSASVR…REIGLELSVM (159 aa)) form the Obg domain. Residues 160–332 (ADIGLLGIPN…LVAGLFKLVL (173 aa)) enclose the OBG-type G domain. GTP is bound by residues 166-173 (GIPNAGKS), 191-195 (FTTLH), 212-215 (DIPG), 282-285 (NKID), and 313-315 (SAL). Residues S173 and T193 each coordinate Mg(2+).

Belongs to the TRAFAC class OBG-HflX-like GTPase superfamily. OBG GTPase family. In terms of assembly, monomer. Mg(2+) is required as a cofactor.

Its subcellular location is the cytoplasm. An essential GTPase which binds GTP, GDP and possibly (p)ppGpp with moderate affinity, with high nucleotide exchange rates and a fairly low GTP hydrolysis rate. Plays a role in control of the cell cycle, stress response, ribosome biogenesis and in those bacteria that undergo differentiation, in morphogenesis control. This chain is GTPase Obg, found in Vesicomyosocius okutanii subsp. Calyptogena okutanii (strain HA).